Reading from the N-terminus, the 286-residue chain is Pantothenate synthetase (286 aa).

Residue 30 to 37 (MGNLHAGH) coordinates ATP. The active-site Proton donor is His-37. Residue Gln-61 participates in (R)-pantoate binding. Gln-61 is a beta-alanine binding site. 149–152 (GEKD) lines the ATP pocket. (R)-pantoate is bound at residue Gln-155. ATP is bound by residues Val-178 and 186-189 (MSSR).

Belongs to the pantothenate synthetase family. Homodimer.

The protein resides in the cytoplasm. It carries out the reaction (R)-pantoate + beta-alanine + ATP = (R)-pantothenate + AMP + diphosphate + H(+). It functions in the pathway cofactor biosynthesis; (R)-pantothenate biosynthesis; (R)-pantothenate from (R)-pantoate and beta-alanine: step 1/1. Functionally, catalyzes the condensation of pantoate with beta-alanine in an ATP-dependent reaction via a pantoyl-adenylate intermediate. The protein is Pantothenate synthetase of Methylococcus capsulatus (strain ATCC 33009 / NCIMB 11132 / Bath).